Reading from the N-terminus, the 361-residue chain is Chorismate synthase (361 aa).

Arg48 is an NADP(+) binding site. FMN-binding positions include 125–127 (RSS), 238–239 (NA), Gly278, 293–297 (KPTSS), and Arg319.

The protein belongs to the chorismate synthase family. As to quaternary structure, homotetramer. The cofactor is FMNH2.

It catalyses the reaction 5-O-(1-carboxyvinyl)-3-phosphoshikimate = chorismate + phosphate. It functions in the pathway metabolic intermediate biosynthesis; chorismate biosynthesis; chorismate from D-erythrose 4-phosphate and phosphoenolpyruvate: step 7/7. Catalyzes the anti-1,4-elimination of the C-3 phosphate and the C-6 proR hydrogen from 5-enolpyruvylshikimate-3-phosphate (EPSP) to yield chorismate, which is the branch point compound that serves as the starting substrate for the three terminal pathways of aromatic amino acid biosynthesis. This reaction introduces a second double bond into the aromatic ring system. In Vibrio anguillarum (strain ATCC 68554 / 775) (Listonella anguillarum), this protein is Chorismate synthase.